We begin with the raw amino-acid sequence, 59 residues long: Large ribosomal subunit protein uL30 (59 aa).

This sequence belongs to the universal ribosomal protein uL30 family. Part of the 50S ribosomal subunit.

The protein is Large ribosomal subunit protein uL30 of Rhodococcus jostii (strain RHA1).